We begin with the raw amino-acid sequence, 993 residues long: ATP-dependent DNA helicase MPH1 (993 aa).

The Helicase ATP-binding domain occupies 94-261; sequence IVHKSLFQNT…EVVNNLDISK (168 aa). An ATP-binding site is contributed by 107–114; that stretch reads IPTGMGKT. The DEAH box signature appears at 209–212; sequence DEAH. Residues 507 to 655 enclose the Helicase C-terminal domain; sequence KVERLHRQEQ…CIDYKKSDRI (149 aa). The segment at 530 to 551 is disordered; it reads NDKLERSARRTGSSEEAQISGM. Polar residues predominate over residues 539-551; that stretch reads RTGSSEEAQISGM. An FKH1-binding region region spans residues 751–810; it reads LVTSNENPSKKRKIFKALDNLENDSTEEASSSLETEDEEVSDDNNVFIAEGQNGCQKDLE. Residues Thr776 and Thr785 each carry the phosphothreonine modification.

The protein belongs to the DEAD box helicase family. DEAH subfamily. FANCM sub-subfamily. As to quaternary structure, interacts with the MHF histone-fold complex composed of MHF1 and MHF2 to form the FANCM-MHF complex. Interacts with FHK1. In terms of processing, phosphorylation at both Thr-776 and Thr-785 is required for the interaction with FKH1.

The protein resides in the nucleus. It carries out the reaction ATP + H2O = ADP + phosphate + H(+). Functionally, ATP-dependent DNA helicase involved in DNA damage repair by homologous recombination and in genome maintenance. Capable of unwinding D-loops. Plays a role in limiting crossover recombinants during mitotic DNA double-strand break (DSB) repair. Prevents crossovers between ectopic sequences by removing substrates for MUS81-MMS4 or RAD1-RAD10 cleavage. Component of a FANCM-MHF complex which promotes gene conversion at blocked replication forks, probably by reversal of the stalled fork. Binds to flap-structured DNA but not to non-flap nicked DNA, and participates in Okazaki fragment processing by stimulating the endonuclease activities of FEN1 and DNA2. Involved in recombination donor preference during mating-type switching via interaction with FKH1. The chain is ATP-dependent DNA helicase MPH1 from Saccharomyces cerevisiae (strain ATCC 204508 / S288c) (Baker's yeast).